The sequence spans 251 residues: L-ascorbate peroxidase 2, cytosolic (251 aa).

The Proton acceptor role is filled by histidine 43. Heme b is bound at residue histidine 163. 5 residues coordinate K(+): threonine 164, threonine 180, asparagine 182, isoleucine 185, and aspartate 187.

This sequence belongs to the peroxidase family. Ascorbate peroxidase subfamily. Requires heme b as cofactor. In terms of tissue distribution, detected in bundle sheath cells, the photosynthetic cells that surround the phloem and xylem.

The protein localises to the cytoplasm. The enzyme catalyses L-ascorbate + H2O2 = L-dehydroascorbate + 2 H2O. Plays a key role in hydrogen peroxide removal. This Arabidopsis thaliana (Mouse-ear cress) protein is L-ascorbate peroxidase 2, cytosolic.